The following is a 357-amino-acid chain: Probable 3'(2'),5'-bisphosphate nucleotidase 3 (357 aa).

Residue D46 is the Proton acceptor of the active site. Residues E71, D135, and I137 each contribute to the Mg(2+) site. T140 functions as the Proton acceptor in the catalytic mechanism. Adenosine 3',5'-bisphosphate is bound by residues T140, S256, K259, and R273. The AMP site is built by S256, K259, and R273.

Belongs to the inositol monophosphatase superfamily. Mg(2+) is required as a cofactor.

The enzyme catalyses 3'-phosphoadenylyl sulfate + H2O = adenosine 5'-phosphosulfate + phosphate. It carries out the reaction adenosine 3',5'-bisphosphate + H2O = AMP + phosphate. The catalysed reaction is adenosine 2',5'-bisphosphate + H2O = AMP + phosphate. It catalyses the reaction 1D-myo-inositol 1,4-bisphosphate + H2O = 1D-myo-inositol 4-phosphate + phosphate. The enzyme catalyses 1D-myo-inositol 1,3,4-trisphosphate + H2O = 1D-myo-inositol 3,4-bisphosphate + phosphate. It participates in signal transduction; phosphatidylinositol signaling pathway. Phosphatase that converts adenosine 3'-phosphate 5'-phosphosulfate (PAPS) to adenosine 5'-phosphosulfate (APS) and 3'(2')-phosphoadenosine 5'-phosphate (PAP) to AMP. Is also able to hydrolyze inositol 1,4-bisphosphate and inositol 1,3,4-trisphosphate. The sequence is that of Probable 3'(2'),5'-bisphosphate nucleotidase 3 (SAL3) from Arabidopsis thaliana (Mouse-ear cress).